A 256-amino-acid chain; its full sequence is ATP synthase subunit a (256 aa).

Positions 1 to 8 are cleaved as a propeptide — removed in mature form; the sequence is MYQFNFIL. Transmembrane regions (helical) follow at residues 34 to 54, 92 to 112, 121 to 141, 148 to 168, 186 to 206, 209 to 229, and 230 to 250; these read ITNI…YHLL, YFPF…IGMV, HFIL…FLGL, FFSL…LVLI, ANIL…YNIM, GILF…FSGL, and ELAI…SYIK.

Belongs to the ATPase A chain family. F-type ATPases have 2 components, CF(1) - the catalytic core - and CF(0) - the membrane proton channel. CF(1) has five subunits: alpha(3), beta(3), gamma(1), delta(1), epsilon(1). CF(0) has three main subunits: a, b and c.

The protein localises to the mitochondrion inner membrane. In terms of biological role, mitochondrial membrane ATP synthase (F(1)F(0) ATP synthase or Complex V) produces ATP from ADP in the presence of a proton gradient across the membrane which is generated by electron transport complexes of the respiratory chain. F-type ATPases consist of two structural domains, F(1) - containing the extramembraneous catalytic core and F(0) - containing the membrane proton channel, linked together by a central stalk and a peripheral stalk. During catalysis, ATP synthesis in the catalytic domain of F(1) is coupled via a rotary mechanism of the central stalk subunits to proton translocation. Key component of the proton channel; it may play a direct role in the translocation of protons across the membrane. This Emericella nidulans (Aspergillus nidulans) protein is ATP synthase subunit a (atp6).